We begin with the raw amino-acid sequence, 425 residues long: Stabilizer of axonemal microtubules 4 (425 aa).

Disordered stretches follow at residues 259–297 (RGSD…YQPP) and 315–335 (NKEP…SYEQ). The segment covering 260–272 (GSDRDTGYSRVSE) has biased composition (basic and acidic residues). Over residues 277 to 290 (PRMPTPSSQPTSMS) the composition is skewed to low complexity. The span at 321–332 (FTLNNPSYVRSS) shows a compositional bias: polar residues.

Microtubule inner protein component of sperm flagellar doublet microtubules. Interacts with PPP1CA. In terms of tissue distribution, expressed in brain, ovaries and testis. Expressed in the tracheal epithelium and in secondary spermatocytes and spermatids present in the seminiferous tubule. Expressed in ependymal cells lining the ventricular walls of the brain.

It localises to the cell projection. It is found in the cilium. The protein localises to the cytoplasm. Its subcellular location is the cytoskeleton. The protein resides in the flagellum axoneme. This is Stabilizer of axonemal microtubules 4 from Rattus norvegicus (Rat).